The primary structure comprises 695 residues: UvrABC system protein B (695 aa).

Residues 25-176 (KSISEGHRFQ…NQRDVLRDLA (152 aa)) enclose the Helicase ATP-binding domain. 38 to 45 (GATGTGKT) contacts ATP. Positions 91–114 (YYDYYQPEAYVPSTDTYIAKSSSI) match the Beta-hairpin motif. Positions 454 to 617 (LLGEIYLRLE…ITPKPIVKKN (164 aa)) constitute a Helicase C-terminal domain. Residues 652–687 (PELIGQLELKMKEAAKNLEFEEAAQLRDRIKKLRQR) form the UVR domain.

It belongs to the UvrB family. As to quaternary structure, forms a heterotetramer with UvrA during the search for lesions. Interacts with UvrC in an incision complex.

The protein resides in the cytoplasm. Its function is as follows. The UvrABC repair system catalyzes the recognition and processing of DNA lesions. A damage recognition complex composed of 2 UvrA and 2 UvrB subunits scans DNA for abnormalities. Upon binding of the UvrA(2)B(2) complex to a putative damaged site, the DNA wraps around one UvrB monomer. DNA wrap is dependent on ATP binding by UvrB and probably causes local melting of the DNA helix, facilitating insertion of UvrB beta-hairpin between the DNA strands. Then UvrB probes one DNA strand for the presence of a lesion. If a lesion is found the UvrA subunits dissociate and the UvrB-DNA preincision complex is formed. This complex is subsequently bound by UvrC and the second UvrB is released. If no lesion is found, the DNA wraps around the other UvrB subunit that will check the other stand for damage. This is UvrABC system protein B from Synechococcus sp. (strain JA-2-3B'a(2-13)) (Cyanobacteria bacterium Yellowstone B-Prime).